The sequence spans 192 residues: Epididymal-specific lipocalin-12 (192 aa).

An N-terminal signal peptide occupies residues 1-19; sequence MRLLCGLWLWLSLLKVLQA. Residues C88 and C192 are joined by a disulfide bond.

Belongs to the calycin superfamily. Lipocalin family. As to quaternary structure, monomer.

Its subcellular location is the secreted. Its function is as follows. Binds all-trans retinoic acid and may act as a retinoid carrier protein within the epididymis. May play a role in male fertility. This Homo sapiens (Human) protein is Epididymal-specific lipocalin-12 (LCN12).